A 419-amino-acid polypeptide reads, in one-letter code: Zinc finger protein Pegasus (419 aa).

3 consecutive C2H2-type zinc fingers follow at residues 79 to 101 (LKCRYCNYATRGTARLIEHIRIH), 107 to 129 (HRCHLCPFASAYERHLEAHMRSH), and 135 to 158 (YKCELCSFRCSDRSNLSHHRRRRH). Disordered regions lie at residues 203–255 (LQKP…DQDM) and 310–360 (SVNT…TPVQ). The segment covering 208-228 (SEQHHLGDFTHDLPPHAHLHQ) has biased composition (basic and acidic residues). Polar residues-rich tracts occupy residues 310-320 (SVNTAQASSPI) and 341-360 (ERTSTPSGTNSQPGTPTPVQ). C2H2-type zinc fingers lie at residues 366 to 388 (HHCPHCHIYFPDNILYTIHMGCH) and 394 to 418 (FQCNICGHRCRNSYDFACHFARGQH).

Belongs to the Ikaros C2H2-type zinc-finger protein family. Probably self-associates.

The protein resides in the nucleus. Its function is as follows. Transcriptional repressor that binds the core 5'GNNTGTNG-3' DNA consensus sequence. The chain is Zinc finger protein Pegasus (ikzf5) from Danio rerio (Zebrafish).